The chain runs to 359 residues: Phospho-N-acetylmuramoyl-pentapeptide-transferase (359 aa).

Transmembrane regions (helical) follow at residues 3-23 (QILF…PVLI), 53-73 (GGVA…LIGI), 84-104 (GLLV…DDFI), 117-137 (TAKL…ALQF), 156-176 (IATV…LVSA), 187-207 (LDGL…IITF), 231-251 (LALI…WNAA), 255-275 (IFMG…LSIT), 283-303 (VVIG…VAVF), and 330-350 (VIIR…ALFY).

Belongs to the glycosyltransferase 4 family. MraY subfamily. It depends on Mg(2+) as a cofactor.

It is found in the cell membrane. The enzyme catalyses UDP-N-acetyl-alpha-D-muramoyl-L-alanyl-gamma-D-glutamyl-meso-2,6-diaminopimeloyl-D-alanyl-D-alanine + di-trans,octa-cis-undecaprenyl phosphate = di-trans,octa-cis-undecaprenyl diphospho-N-acetyl-alpha-D-muramoyl-L-alanyl-D-glutamyl-meso-2,6-diaminopimeloyl-D-alanyl-D-alanine + UMP. Its pathway is cell wall biogenesis; peptidoglycan biosynthesis. Its function is as follows. Catalyzes the initial step of the lipid cycle reactions in the biosynthesis of the cell wall peptidoglycan: transfers peptidoglycan precursor phospho-MurNAc-pentapeptide from UDP-MurNAc-pentapeptide onto the lipid carrier undecaprenyl phosphate, yielding undecaprenyl-pyrophosphoryl-MurNAc-pentapeptide, known as lipid I. This chain is Phospho-N-acetylmuramoyl-pentapeptide-transferase, found in Rhodococcus opacus (strain B4).